We begin with the raw amino-acid sequence, 73 residues long: Beta-defensin 108B (73 aa).

The signal sequence occupies residues 1-22 (MRIAVLLFAIFFFMSQVLPARG). 3 disulfides stabilise this stretch: C28–C55, C35–C49, and C39–C56.

Belongs to the beta-defensin family. Specifically expressed in testis. Low expression is detected also in liver.

It is found in the secreted. Its function is as follows. Has antibacterial activity. The polypeptide is Beta-defensin 108B (DEFB108B) (Homo sapiens (Human)).